The sequence spans 172 residues: Transcriptional repressor NrdR (172 aa).

A zinc finger spans residues C3–C34. The region spanning L46–D136 is the ATP-cone domain.

Belongs to the NrdR family. Zn(2+) is required as a cofactor.

Negatively regulates transcription of bacterial ribonucleotide reductase nrd genes and operons by binding to NrdR-boxes. The protein is Transcriptional repressor NrdR of Nocardioides sp. (strain ATCC BAA-499 / JS614).